Here is a 260-residue protein sequence, read N- to C-terminus: uncharacterized protein (260 aa).

The first 22 residues, Met1–Gly22, serve as a signal peptide directing secretion. Cys23 is lipidated: N-palmitoyl cysteine. A lipid anchor (S-diacylglycerol cysteine) is attached at Cys23.

The protein belongs to the staphylococcal tandem lipoprotein family.

Its subcellular location is the cell membrane. This is an uncharacterized protein from Staphylococcus aureus (strain bovine RF122 / ET3-1).